Consider the following 110-residue polypeptide: MTELMRIAALFAATALAEIVGCYLPWLVLKAGRPAWLLVPAALSLALFAWLLTLHPSAAGRTYAAYGGVYIAVALIWLRVVDGVALTRWDVAGAVLALGGMAVIALQPRA.

The next 4 helical transmembrane spans lie at 9 to 29, 34 to 54, 66 to 86, and 88 to 108; these read ALFA…WLVL, PAWL…LLTL, YGGV…GVAL, and RWDV…ALQP.

The protein belongs to the UPF0060 family.

It is found in the cell inner membrane. The chain is UPF0060 membrane protein Bcen_0802 from Burkholderia orbicola (strain AU 1054).